The sequence spans 426 residues: 3-phosphoshikimate 1-carboxyvinyltransferase (426 aa).

3-phosphoshikimate contacts are provided by lysine 20, serine 21, and arginine 25. Lysine 20 contacts phosphoenolpyruvate. Phosphoenolpyruvate is bound by residues glycine 92 and arginine 120. 3-phosphoshikimate is bound by residues serine 166, glutamine 168, aspartate 312, and lysine 339. Glutamine 168 contacts phosphoenolpyruvate. Aspartate 312 acts as the Proton acceptor in catalysis. Residues arginine 343 and arginine 385 each contribute to the phosphoenolpyruvate site.

The protein belongs to the EPSP synthase family. As to quaternary structure, monomer.

The protein localises to the cytoplasm. It carries out the reaction 3-phosphoshikimate + phosphoenolpyruvate = 5-O-(1-carboxyvinyl)-3-phosphoshikimate + phosphate. The protein operates within metabolic intermediate biosynthesis; chorismate biosynthesis; chorismate from D-erythrose 4-phosphate and phosphoenolpyruvate: step 6/7. Functionally, catalyzes the transfer of the enolpyruvyl moiety of phosphoenolpyruvate (PEP) to the 5-hydroxyl of shikimate-3-phosphate (S3P) to produce enolpyruvyl shikimate-3-phosphate and inorganic phosphate. This Enterococcus faecalis (strain ATCC 700802 / V583) protein is 3-phosphoshikimate 1-carboxyvinyltransferase.